A 491-amino-acid chain; its full sequence is ADP-specific phosphofructokinase (491 aa).

The region spanning 4–486 is the ADPK domain; it reads EEWEQRHAEA…FVAMLAKIKQ (483 aa). Mg(2+) contacts are provided by Glu-281, Glu-312, and Asp-470. Asp-470 functions as the Proton acceptor in the catalytic mechanism.

Belongs to the carbohydrate kinase PfkC family. Mg(2+) is required as a cofactor.

It is found in the cytoplasm. It carries out the reaction beta-D-fructose 6-phosphate + ADP = beta-D-fructose 1,6-bisphosphate + AMP + H(+). The protein operates within carbohydrate degradation; glycolysis. In terms of biological role, catalyzes the phosphorylation of fructose 6-phosphate to fructose 1,6-bisphosphate using ADP as the phosphate donor. In Methanosarcina acetivorans (strain ATCC 35395 / DSM 2834 / JCM 12185 / C2A), this protein is ADP-specific phosphofructokinase.